Here is a 1089-residue protein sequence, read N- to C-terminus: Platelet-derived growth factor receptor alpha (1089 aa).

An N-terminal signal peptide occupies residues 1–24; it reads MGTSHQVFLVLSCLLTGPGLISCQ. Ig-like C2-type domains lie at 25 to 113, 117 to 201, 202 to 306, 319 to 410, and 414 to 517; these read LLLP…SEIE, IYIY…FKTS, EFNV…KRVT, PTFG…FELS, and PASI…LKLV. At 25 to 528 the chain is on the extracellular side; sequence LLLPSILPNE…PTLRSELTVA (504 aa). N-linked (GlcNAc...) asparagine glycosylation is found at asparagine 42, asparagine 76, asparagine 89, asparagine 103, and asparagine 179. Cysteine 49 and cysteine 100 form a disulfide bridge. 2 cysteine pairs are disulfide-bonded: cysteine 150-cysteine 189 and cysteine 235-cysteine 290. 5 N-linked (GlcNAc...) asparagine glycosylation sites follow: asparagine 353, asparagine 359, asparagine 458, asparagine 468, and asparagine 506. Residues cysteine 435 and cysteine 501 are joined by a disulfide bond. A helical transmembrane segment spans residues 529–549; that stretch reads AAVLVLLVIVIVSLIVLVVIW. At 550–1089 the chain is on the cytoplasmic side; the sequence is KQKPRYEIRW…SSDLVEDSFL (540 aa). 2 positions are modified to phosphotyrosine; by autocatalysis: tyrosine 572 and tyrosine 574. The 362-residue stretch at 593 to 954 folds into the Protein kinase domain; sequence LVLGRILGSG…HLSEIVENLL (362 aa). ATP contacts are provided by residues 599-607 and lysine 627; that span reads LGSGAFGKV. Phosphotyrosine; by autocatalysis occurs at positions 720, 731, 742, 754, 762, and 768. Aspartate 818 functions as the Proton acceptor in the catalytic mechanism. Phosphotyrosine; by autocatalysis occurs at positions 849, 988, and 1018. Residues 1018–1089 are disordered; it reads YIIPLPDIDP…SSDLVEDSFL (72 aa). Over residues 1041–1059 the composition is skewed to polar residues; that stretch reads SSQTSEESAIETGSSSSTF. Residues 1065-1089 are compositionally biased toward acidic residues; sequence ETIEDIDMMDDIGIDSSDLVEDSFL.

This sequence belongs to the protein kinase superfamily. Tyr protein kinase family. CSF-1/PDGF receptor subfamily. Interacts with homodimeric PDGFA, PDGFB and PDGFC, and with heterodimers formed by PDGFA and PDGFB. Monomer in the absence of bound ligand. Interaction with dimeric PDGFA, PDGFB and/or PDGFC leads to receptor dimerization, where both PDGFRA homodimers and heterodimers with PDGFRB are observed. Interacts (tyrosine phosphorylated) with SHB (via SH2 domain). Interacts (tyrosine phosphorylated) with SHF (via SH2 domain). Interacts (tyrosine phosphorylated) with SRC (via SH2 domain). Interacts (tyrosine phosphorylated) with PIK3R1. Interacts (tyrosine phosphorylated) with PLCG1 (via SH2 domain). Interacts (tyrosine phosphorylated) with CRK, GRB2 and GRB7. Interacts with CD248; this interaction promotes PDGF receptor signaling pathway. Ubiquitinated, leading to its internalization and degradation. Post-translationally, autophosphorylated on tyrosine residues upon ligand binding. Autophosphorylation occurs in trans, i.e. one subunit of the dimeric receptor phosphorylates tyrosine residues on the other subunit. Phosphorylation at Tyr-731 and Tyr-742 is important for interaction with PIK3R1. Phosphorylation at Tyr-720 and Tyr-754 is important for interaction with PTPN11. Phosphorylation at Tyr-762 is important for interaction with CRK. Phosphorylation at Tyr-572 and Tyr-574 is important for interaction with SRC and SRC family members. Phosphorylation at Tyr-988 and Tyr-1018 is important for interaction with PLCG1. Focally expressed in cortical interstitial cells and highly expressed in the interstitium of the papillary region. Also expressed by adventitial cells in arterial vessels. Up-regulated in areas of renal fibrosis. In mice with unilateral ureteral obstruction, expression in cortical interstitial cells becomes prominent at day 4 which increases progressively until day 14.

Its subcellular location is the cell membrane. The protein resides in the cell projection. The protein localises to the cilium. It is found in the golgi apparatus. The catalysed reaction is L-tyrosyl-[protein] + ATP = O-phospho-L-tyrosyl-[protein] + ADP + H(+). Its activity is regulated as follows. Present in an inactive conformation in the absence of bound ligand. Binding of PDGFA and/or PDGFB leads to dimerization and activation by autophosphorylation on tyrosine residues. Inhibited by imatinib, nilotinib and sorafenib. In terms of biological role, tyrosine-protein kinase that acts as a cell-surface receptor for PDGFA, PDGFB and PDGFC and plays an essential role in the regulation of embryonic development, cell proliferation, survival and chemotaxis. Depending on the context, promotes or inhibits cell proliferation and cell migration. Plays an important role in the differentiation of bone marrow-derived mesenchymal stem cells. Required for normal skeleton development and cephalic closure during embryonic development. Required for normal development of the mucosa lining the gastrointestinal tract, and for recruitment of mesenchymal cells and normal development of intestinal villi. Plays a role in cell migration and chemotaxis in wound healing. Plays a role in platelet activation, secretion of agonists from platelet granules, and in thrombin-induced platelet aggregation. Binding of its cognate ligands - homodimeric PDGFA, homodimeric PDGFB, heterodimers formed by PDGFA and PDGFB or homodimeric PDGFC -leads to the activation of several signaling cascades; the response depends on the nature of the bound ligand and is modulated by the formation of heterodimers between PDGFRA and PDGFRB. Phosphorylates PIK3R1, PLCG1, and PTPN11. Activation of PLCG1 leads to the production of the cellular signaling molecules diacylglycerol and inositol 1,4,5-trisphosphate, mobilization of cytosolic Ca(2+) and the activation of protein kinase C. Phosphorylates PIK3R1, the regulatory subunit of phosphatidylinositol 3-kinase, and thereby mediates activation of the AKT1 signaling pathway. Mediates activation of HRAS and of the MAP kinases MAPK1/ERK2 and/or MAPK3/ERK1. Promotes activation of STAT family members STAT1, STAT3 and STAT5A and/or STAT5B. Receptor signaling is down-regulated by protein phosphatases that dephosphorylate the receptor and its down-stream effectors, and by rapid internalization of the activated receptor. The protein is Platelet-derived growth factor receptor alpha (Pdgfra) of Mus musculus (Mouse).